Here is a 240-residue protein sequence, read N- to C-terminus: Cell division control protein 14 (240 aa).

As to quaternary structure, interacts with sid1.

Its subcellular location is the cytoplasm. It localises to the cytoskeleton. The protein localises to the microtubule organizing center. The protein resides in the spindle pole body. Has a role in the septation initiation network (SIN) required for cytokinesis. The protein is Cell division control protein 14 (cdc14) of Schizosaccharomyces pombe (strain 972 / ATCC 24843) (Fission yeast).